The primary structure comprises 1115 residues: Carbamoyl phosphate synthase large chain (1115 aa).

A carboxyphosphate synthetic domain region spans residues 1 to 407; it reads MPRRTDLHHV…ALGKVMRSLE (407 aa). ATP-binding residues include arginine 134, arginine 174, glycine 180, glycine 181, glutamate 213, isoleucine 215, glutamate 220, glycine 246, valine 247, histidine 248, glutamine 290, and glutamate 304. Residues 138–333 enclose the ATP-grasp 1 domain; that stretch reads KDIVAKAGGE…IAKIAAKLAI (196 aa). 3 residues coordinate Mg(2+): glutamine 290, glutamate 304, and asparagine 306. Mn(2+)-binding residues include glutamine 290, glutamate 304, and asparagine 306. The oligomerization domain stretch occupies residues 408-559; the sequence is TTRAGFWTAP…ELDPAAETEV (152 aa). Residues 560–965 are carbamoyl phosphate synthetic domain; that stretch reads APQTERPKVL…AFAKSQTAAY (406 aa). In terms of domain architecture, ATP-grasp 2 spans 693 to 884; the sequence is GDLLSAAGLP…LAKACARIML (192 aa). ATP contacts are provided by arginine 729, arginine 768, leucine 770, glutamate 775, glycine 800, isoleucine 801, histidine 802, serine 803, glutamine 843, and glutamate 855. Mg(2+) contacts are provided by glutamine 843, glutamate 855, and asparagine 857. The Mn(2+) site is built by glutamine 843, glutamate 855, and asparagine 857. The MGS-like domain maps to 966–1113; that stretch reads GSLPAQGTVF…QELHRVIGGV (148 aa). The allosteric domain stretch occupies residues 966–1115; it reads GSLPAQGTVF…LHRVIGGVER (150 aa).

The protein belongs to the CarB family. Composed of two chains; the small (or glutamine) chain promotes the hydrolysis of glutamine to ammonia, which is used by the large (or ammonia) chain to synthesize carbamoyl phosphate. Tetramer of heterodimers (alpha,beta)4. Mg(2+) is required as a cofactor. The cofactor is Mn(2+).

The enzyme catalyses hydrogencarbonate + L-glutamine + 2 ATP + H2O = carbamoyl phosphate + L-glutamate + 2 ADP + phosphate + 2 H(+). It catalyses the reaction hydrogencarbonate + NH4(+) + 2 ATP = carbamoyl phosphate + 2 ADP + phosphate + 2 H(+). It functions in the pathway amino-acid biosynthesis; L-arginine biosynthesis; carbamoyl phosphate from bicarbonate: step 1/1. It participates in pyrimidine metabolism; UMP biosynthesis via de novo pathway; (S)-dihydroorotate from bicarbonate: step 1/3. Its function is as follows. Large subunit of the glutamine-dependent carbamoyl phosphate synthetase (CPSase). CPSase catalyzes the formation of carbamoyl phosphate from the ammonia moiety of glutamine, carbonate, and phosphate donated by ATP, constituting the first step of 2 biosynthetic pathways, one leading to arginine and/or urea and the other to pyrimidine nucleotides. The large subunit (synthetase) binds the substrates ammonia (free or transferred from glutamine from the small subunit), hydrogencarbonate and ATP and carries out an ATP-coupled ligase reaction, activating hydrogencarbonate by forming carboxy phosphate which reacts with ammonia to form carbamoyl phosphate. This is Carbamoyl phosphate synthase large chain from Mycobacterium bovis (strain ATCC BAA-935 / AF2122/97).